The chain runs to 91 residues: MANTASAEKRNRQAQKRRARNVQVRTGVKSAVKKLREAIAKGDPAATQVALKSAEKTIGKAASKGVLHKNAASRKISRLAKAAAKPAAAAK.

Residues 1 to 28 form a disordered region; it reads MANTASAEKRNRQAQKRRARNVQVRTGV.

This sequence belongs to the bacterial ribosomal protein bS20 family.

Functionally, binds directly to 16S ribosomal RNA. The polypeptide is Small ribosomal subunit protein bS20 (Anaeromyxobacter dehalogenans (strain 2CP-1 / ATCC BAA-258)).